Here is a 345-residue protein sequence, read N- to C-terminus: NADH-ubiquinone oxidoreductase chain 2 (345 aa).

9 helical membrane-spanning segments follow: residues 25 to 45 (HWLL…PLMT), 60 to 80 (FLTQ…NAWL), 99 to 119 (TIAI…PEVL), 149 to 171 (LNTP…GGLN), 178 to 198 (ILAF…PFSP), 199 to 219 (QLMI…FLVL), 242 to 262 (ALSL…GFVP), 282 to 302 (LALS…IVTL), and 324 to 344 (LLLS…PLTL).

Belongs to the complex I subunit 2 family. In terms of assembly, core subunit of respiratory chain NADH dehydrogenase (Complex I) which is composed of 45 different subunits.

It is found in the mitochondrion inner membrane. It carries out the reaction a ubiquinone + NADH + 5 H(+)(in) = a ubiquinol + NAD(+) + 4 H(+)(out). In terms of biological role, core subunit of the mitochondrial membrane respiratory chain NADH dehydrogenase (Complex I) which catalyzes electron transfer from NADH through the respiratory chain, using ubiquinone as an electron acceptor. Essential for the catalytic activity and assembly of complex I. The polypeptide is NADH-ubiquinone oxidoreductase chain 2 (mt-nd2) (Xenopus laevis (African clawed frog)).